The chain runs to 367 residues: tRNA/tmRNA (uracil-C(5))-methyltransferase (367 aa).

Residues Gln-190, Tyr-218, Asn-223, Glu-239, and Asp-299 each coordinate S-adenosyl-L-methionine. Cys-324 serves as the catalytic Nucleophile. Glu-358 acts as the Proton acceptor in catalysis.

The protein belongs to the class I-like SAM-binding methyltransferase superfamily. RNA M5U methyltransferase family. TrmA subfamily.

The catalysed reaction is uridine(54) in tRNA + S-adenosyl-L-methionine = 5-methyluridine(54) in tRNA + S-adenosyl-L-homocysteine + H(+). The enzyme catalyses uridine(341) in tmRNA + S-adenosyl-L-methionine = 5-methyluridine(341) in tmRNA + S-adenosyl-L-homocysteine + H(+). Its function is as follows. Dual-specificity methyltransferase that catalyzes the formation of 5-methyluridine at position 54 (m5U54) in all tRNAs, and that of position 341 (m5U341) in tmRNA (transfer-mRNA). This is tRNA/tmRNA (uracil-C(5))-methyltransferase from Erwinia tasmaniensis (strain DSM 17950 / CFBP 7177 / CIP 109463 / NCPPB 4357 / Et1/99).